We begin with the raw amino-acid sequence, 281 residues long: Pantothenate synthetase (281 aa).

30–37 (MGNLHQGH) is a binding site for ATP. Histidine 37 serves as the catalytic Proton donor. Glutamine 61 provides a ligand contact to (R)-pantoate. Glutamine 61 contacts beta-alanine. 149–152 (GNKD) provides a ligand contact to ATP. Residue glutamine 155 coordinates (R)-pantoate. Residues isoleucine 178 and 186-189 (MSSR) each bind ATP.

Belongs to the pantothenate synthetase family. In terms of assembly, homodimer.

The protein resides in the cytoplasm. The enzyme catalyses (R)-pantoate + beta-alanine + ATP = (R)-pantothenate + AMP + diphosphate + H(+). It participates in cofactor biosynthesis; (R)-pantothenate biosynthesis; (R)-pantothenate from (R)-pantoate and beta-alanine: step 1/1. Functionally, catalyzes the condensation of pantoate with beta-alanine in an ATP-dependent reaction via a pantoyl-adenylate intermediate. This is Pantothenate synthetase from Shewanella baltica (strain OS223).